A 67-amino-acid chain; its full sequence is Conotoxin TsMMSK-011 (67 aa).

A signal peptide spans 1 to 20 (MMSKLGVLLTICLLLFPLTA). The propeptide occupies 21-50 (VQLDGDQPADLPALRTQDIATDHSPWFDPV). Intrachain disulfides connect Cys-53–Cys-65, Cys-54–Cys-61, and Cys-58–Cys-64. The residue at position 63 (Pro-63) is a 4-hydroxyproline.

The protein belongs to the conotoxin M superfamily. In terms of tissue distribution, expressed by the venom duct.

It is found in the secreted. This chain is Conotoxin TsMMSK-011, found in Conus tessulatus (Tessellate cone).